We begin with the raw amino-acid sequence, 477 residues long: Aspartyl/glutamyl-tRNA(Asn/Gln) amidotransferase subunit B (477 aa).

It belongs to the GatB/GatE family. GatB subfamily. Heterotrimer of A, B and C subunits.

It catalyses the reaction L-glutamyl-tRNA(Gln) + L-glutamine + ATP + H2O = L-glutaminyl-tRNA(Gln) + L-glutamate + ADP + phosphate + H(+). It carries out the reaction L-aspartyl-tRNA(Asn) + L-glutamine + ATP + H2O = L-asparaginyl-tRNA(Asn) + L-glutamate + ADP + phosphate + 2 H(+). Its function is as follows. Allows the formation of correctly charged Asn-tRNA(Asn) or Gln-tRNA(Gln) through the transamidation of misacylated Asp-tRNA(Asn) or Glu-tRNA(Gln) in organisms which lack either or both of asparaginyl-tRNA or glutaminyl-tRNA synthetases. The reaction takes place in the presence of glutamine and ATP through an activated phospho-Asp-tRNA(Asn) or phospho-Glu-tRNA(Gln). In Sulfurovum sp. (strain NBC37-1), this protein is Aspartyl/glutamyl-tRNA(Asn/Gln) amidotransferase subunit B.